A 90-amino-acid polypeptide reads, in one-letter code: Conotoxin ba9a (90 aa).

The first 27 residues, 1–27 (MHLSLARSAGLMWLLLFAVGNFVGVQP), serve as a signal peptide directing secretion. Residues 28 to 62 (GQITRDVDNGQLADNRRNLQSLRKPMTLFKSLNKR) constitute a propeptide that is removed on maturation. At Glu67 the chain carries 4-carboxyglutamate. Residues Pro76 and Pro80 each carry the 4-hydroxyproline modification.

As to expression, expressed by the venom duct.

The protein localises to the secreted. The protein is Conotoxin ba9a of Conus bayani (Bayan's cone).